A 476-amino-acid polypeptide reads, in one-letter code: Bifunctional protein GlmU (476 aa).

The interval 1-232 (MDNLAAIILA…PVEVMGINDR (232 aa)) is pyrophosphorylase. UDP-N-acetyl-alpha-D-glucosamine contacts are provided by residues 9 to 12 (LAAG), K23, Q75, and 80 to 81 (GT). D105 provides a ligand contact to Mg(2+). Positions 142, 157, 172, and 230 each coordinate UDP-N-acetyl-alpha-D-glucosamine. Mg(2+) is bound at residue N230. Residues 233-253 (VQLAEAARHARRRIAEEHMLN) are linker. The segment at 254–476 (GVTLVDPAAT…EGWKLRKRDQ (223 aa)) is N-acetyltransferase. UDP-N-acetyl-alpha-D-glucosamine-binding residues include R353 and K371. H383 functions as the Proton acceptor in the catalytic mechanism. 2 residues coordinate UDP-N-acetyl-alpha-D-glucosamine: Y386 and N397. Acetyl-CoA contacts are provided by residues 406–407 (NY), S425, A443, and R460.

The protein in the N-terminal section; belongs to the N-acetylglucosamine-1-phosphate uridyltransferase family. It in the C-terminal section; belongs to the transferase hexapeptide repeat family. As to quaternary structure, homotrimer. Mg(2+) serves as cofactor.

The protein resides in the cytoplasm. It carries out the reaction alpha-D-glucosamine 1-phosphate + acetyl-CoA = N-acetyl-alpha-D-glucosamine 1-phosphate + CoA + H(+). The catalysed reaction is N-acetyl-alpha-D-glucosamine 1-phosphate + UTP + H(+) = UDP-N-acetyl-alpha-D-glucosamine + diphosphate. Its pathway is nucleotide-sugar biosynthesis; UDP-N-acetyl-alpha-D-glucosamine biosynthesis; N-acetyl-alpha-D-glucosamine 1-phosphate from alpha-D-glucosamine 6-phosphate (route II): step 2/2. It participates in nucleotide-sugar biosynthesis; UDP-N-acetyl-alpha-D-glucosamine biosynthesis; UDP-N-acetyl-alpha-D-glucosamine from N-acetyl-alpha-D-glucosamine 1-phosphate: step 1/1. It functions in the pathway bacterial outer membrane biogenesis; LPS lipid A biosynthesis. In terms of biological role, catalyzes the last two sequential reactions in the de novo biosynthetic pathway for UDP-N-acetylglucosamine (UDP-GlcNAc). The C-terminal domain catalyzes the transfer of acetyl group from acetyl coenzyme A to glucosamine-1-phosphate (GlcN-1-P) to produce N-acetylglucosamine-1-phosphate (GlcNAc-1-P), which is converted into UDP-GlcNAc by the transfer of uridine 5-monophosphate (from uridine 5-triphosphate), a reaction catalyzed by the N-terminal domain. The protein is Bifunctional protein GlmU of Geobacter sulfurreducens (strain ATCC 51573 / DSM 12127 / PCA).